The primary structure comprises 284 residues: Halorhodopsin (284 aa).

Residues 1–30 lie on the Extracellular side of the membrane; it reads MIETAAADILAGGMVPLEMTQTQIFEAVQS. The helical transmembrane segment at 31 to 56 threads the bilayer; that stretch reads DTLLASSLWINIALAGLSILLFVYMG. Residues 57-62 are Cytoplasmic-facing; sequence RNVEDP. A helical membrane pass occupies residues 63-86; the sequence is RAQLIFVATLMVPLVSISSYTGLV. The Extracellular portion of the chain corresponds to 87–110; that stretch reads SGLTVSFLEMPAGHALAGQEVLTP. Residues 111–132 form a helical membrane-spanning segment; the sequence is WGRYLTWALSTPMILIAVGLLA. Over 133 to 135 the chain is Cytoplasmic; sequence GSN. The helical transmembrane segment at 136–159 threads the bilayer; it reads TTKLFTAVVADIGMCVTGLAAALT. At 160–162 the chain is on the extracellular side; that stretch reads TSS. The helical transmembrane segment at 163-185 threads the bilayer; the sequence is YLLRWVWYAISCAFFVVVLYILL. At 186-197 the chain is on the cytoplasmic side; it reads AEWAEDAEIAGT. A helical transmembrane segment spans residues 198-221; the sequence is ADIFNTLKVLTVVLWLGYPIFWAL. Topologically, residues 222–230 are extracellular; that stretch reads GAEGLAVLD. Residues 231–259 traverse the membrane as a helical segment; that stretch reads VAITSWAYSGMDIVAKYLFAFLLLRWVVN. Lys246 is modified (N6-(retinylidene)lysine). Residues 260–284 are Cytoplasmic-facing; sequence NERTVADVASGLGSGSRGGAAPADD.

The protein belongs to the archaeal/bacterial/fungal opsin family.

It is found in the cell membrane. Its function is as follows. Light-driven chloride pump. This chain is Halorhodopsin (hop), found in Halobacterium sp. (strain SG1).